A 299-amino-acid polypeptide reads, in one-letter code: N-acetylaspartate synthetase (299 aa).

Pro residues predominate over residues 44 to 57 (AAPGPAAAPPPAAG). The interval 44–70 (AAPGPAAAPPPAAGPQPHGGTGGAGPP) is disordered. Positions 60–70 (PHGGTGGAGPP) are enriched in gly residues. Residues 118–138 (YALLAALCFAVTRSLLLTCLV) traverse the membrane as a helical segment. An N-acetyltransferase domain is found at 143-280 (LALRYYYSRK…VLPGMTLSLA (138 aa)).

It belongs to the NAT8 family. In terms of tissue distribution, expressed in brain, kidney, liver and spleen. In brain, present in neurons but not in astrocytes (at protein level). Expressed in brain, thymus and spleen.

Its subcellular location is the cytoplasm. The protein resides in the microsome membrane. It localises to the mitochondrion membrane. It is found in the endoplasmic reticulum membrane. It carries out the reaction L-aspartate + acetyl-CoA = N-acetyl-L-aspartate + CoA + H(+). With respect to regulation, aminooxyacetic acid (AOAA) blocks its activity in both cytoplasm and mitochondria. In terms of biological role, catalyzes the synthesis of N-acetylaspartate acid (NAA) from L-aspartate and acetyl-CoA. Promotes dopamine uptake by regulating TNF-alpha expression. Attenuates methamphetamine-induced inhibition of dopamine uptake. This chain is N-acetylaspartate synthetase (Nat8l), found in Mus musculus (Mouse).